The primary structure comprises 397 residues: uncharacterized protein (397 aa).

Belongs to the ROK (NagC/XylR) family.

This is an uncharacterized protein from Escherichia coli (strain K12).